The sequence spans 186 residues: Inner membrane-spanning protein YciB (186 aa).

A run of 5 helical transmembrane segments spans residues 10–30 (IILFFAAFKVWGIYVATAVAI), 47–67 (VEPLQWLSLGVIVLFGGATLL), 76–96 (WKPTVLYWLMGGTLLVGQLVF), 121–141 (WGWTGFFATMGVLNLWVAYNF), and 149–169 (FKLFGGIGLMFAFVIAQALYL).

This sequence belongs to the YciB family.

It localises to the cell inner membrane. Its function is as follows. Plays a role in cell envelope biogenesis, maintenance of cell envelope integrity and membrane homeostasis. This Acidovorax sp. (strain JS42) protein is Inner membrane-spanning protein YciB.